We begin with the raw amino-acid sequence, 214 residues long: MDVDALLQSIPPLAVYLLVSGVVGVESLGIPLPGEVVLVSAALLSSRHDLAVSSIGVGVVAVIGAAVGDSIGYAIGRRFGMPLFDHLGRRFPKHFGPGHVALVERLFNRWGVRAVFFGRFIALLRILAGPLAGALKMHYPRFLAANVSGAICWAGGTTALVYFAGMAAERWMERFSWIALIITVVVGIIAAILLRERTSRIIAELEMEYKNRRH.

4 helical membrane-spanning segments follow: residues 10–30 (IPPL…SLGI), 55–75 (IGVG…GYAI), 147–167 (VSGA…AGMA), and 174–194 (RFSW…AILL).

This sequence belongs to the DedA family.

The protein localises to the cell membrane. This is an uncharacterized protein from Mycobacterium leprae (strain TN).